The sequence spans 181 residues: BURP domain-containing protein 7 (181 aa).

The N-terminal stretch at 1 to 21 (MARSLAALLLLLVAAAGDSHA) is a signal peptide. The BURP domain occupies 65 to 181 (FFLEKDLFPG…RRGRRTGWRP (117 aa)). Residues 112 to 181 (QLSVPAGSPA…RRGRRTGWRP (70 aa)) are disordered. Residues 128 to 143 (RPRRSPARRSNARRRS) show a composition bias toward basic residues. Residues 144–157 (SPWWSSPRPASAPA) show a composition bias toward low complexity. Basic residues predominate over residues 170–181 (GRRRGRRTGWRP).

In terms of tissue distribution, expressed in roots, stems, leaves and shoot.

This is BURP domain-containing protein 7 (BURP7) from Oryza sativa subsp. japonica (Rice).